We begin with the raw amino-acid sequence, 156 residues long: ATP synthase subunit b (156 aa).

Residues 7-29 (LFAQMVVFLVLAWFTMKFVWPPL) traverse the membrane as a helical segment.

The protein belongs to the ATPase B chain family. F-type ATPases have 2 components, F(1) - the catalytic core - and F(0) - the membrane proton channel. F(1) has five subunits: alpha(3), beta(3), gamma(1), delta(1), epsilon(1). F(0) has three main subunits: a(1), b(2) and c(10-14). The alpha and beta chains form an alternating ring which encloses part of the gamma chain. F(1) is attached to F(0) by a central stalk formed by the gamma and epsilon chains, while a peripheral stalk is formed by the delta and b chains.

Its subcellular location is the cell inner membrane. F(1)F(0) ATP synthase produces ATP from ADP in the presence of a proton or sodium gradient. F-type ATPases consist of two structural domains, F(1) containing the extramembraneous catalytic core and F(0) containing the membrane proton channel, linked together by a central stalk and a peripheral stalk. During catalysis, ATP synthesis in the catalytic domain of F(1) is coupled via a rotary mechanism of the central stalk subunits to proton translocation. In terms of biological role, component of the F(0) channel, it forms part of the peripheral stalk, linking F(1) to F(0). The protein is ATP synthase subunit b of Burkholderia ambifaria (strain MC40-6).